The primary structure comprises 84 residues: uncharacterized protein (84 aa).

Transmembrane regions (helical) follow at residues histidine 7–isoleucine 27 and isoleucine 52–cysteine 72.

The protein resides in the membrane. This is an uncharacterized protein from Saccharomyces cerevisiae (strain ATCC 204508 / S288c) (Baker's yeast).